The primary structure comprises 281 residues: 4-hydroxy-3-methylbut-2-enyl diphosphate reductase (281 aa).

Cysteine 12 contributes to the [4Fe-4S] cluster binding site. (2E)-4-hydroxy-3-methylbut-2-enyl diphosphate contacts are provided by histidine 41 and histidine 74. The dimethylallyl diphosphate site is built by histidine 41 and histidine 74. Isopentenyl diphosphate-binding residues include histidine 41 and histidine 74. Residue cysteine 96 participates in [4Fe-4S] cluster binding. Histidine 124 is a binding site for (2E)-4-hydroxy-3-methylbut-2-enyl diphosphate. Histidine 124 provides a ligand contact to dimethylallyl diphosphate. Histidine 124 is a binding site for isopentenyl diphosphate. Glutamate 126 (proton donor) is an active-site residue. Position 164 (threonine 164) interacts with (2E)-4-hydroxy-3-methylbut-2-enyl diphosphate. Cysteine 193 is a [4Fe-4S] cluster binding site. Serine 221, asparagine 223, and serine 265 together coordinate (2E)-4-hydroxy-3-methylbut-2-enyl diphosphate. Dimethylallyl diphosphate contacts are provided by serine 221, asparagine 223, and serine 265. Isopentenyl diphosphate is bound by residues serine 221, asparagine 223, and serine 265.

This sequence belongs to the IspH family. It depends on [4Fe-4S] cluster as a cofactor.

It carries out the reaction isopentenyl diphosphate + 2 oxidized [2Fe-2S]-[ferredoxin] + H2O = (2E)-4-hydroxy-3-methylbut-2-enyl diphosphate + 2 reduced [2Fe-2S]-[ferredoxin] + 2 H(+). The enzyme catalyses dimethylallyl diphosphate + 2 oxidized [2Fe-2S]-[ferredoxin] + H2O = (2E)-4-hydroxy-3-methylbut-2-enyl diphosphate + 2 reduced [2Fe-2S]-[ferredoxin] + 2 H(+). Its pathway is isoprenoid biosynthesis; dimethylallyl diphosphate biosynthesis; dimethylallyl diphosphate from (2E)-4-hydroxy-3-methylbutenyl diphosphate: step 1/1. The protein operates within isoprenoid biosynthesis; isopentenyl diphosphate biosynthesis via DXP pathway; isopentenyl diphosphate from 1-deoxy-D-xylulose 5-phosphate: step 6/6. Catalyzes the conversion of 1-hydroxy-2-methyl-2-(E)-butenyl 4-diphosphate (HMBPP) into a mixture of isopentenyl diphosphate (IPP) and dimethylallyl diphosphate (DMAPP). Acts in the terminal step of the DOXP/MEP pathway for isoprenoid precursor biosynthesis. The sequence is that of 4-hydroxy-3-methylbut-2-enyl diphosphate reductase from Oleidesulfovibrio alaskensis (strain ATCC BAA-1058 / DSM 17464 / G20) (Desulfovibrio alaskensis).